The following is a 77-amino-acid chain: MMFTPLIVLTLLVLATAEHQCGPNEQWSDCPKCELQCGESDKPCATICGEPKCYCSPDKYRRIPDGRCIRKIQCPQH.

Residues 1–17 (MMFTPLIVLTLLVLATA) form the signal peptide. Disulfide bonds link C21/C53, C30/C48, C33/C44, C37/C74, and C55/C68. The region spanning 21–74 (CGPNEQWSDCPKCELQCGESDKPCATICGEPKCYCSPDKYRRIPDGRCIRKIQC) is the TIL domain.

It is found in the secreted. Functionally, defends the organism against the host's proteinases. In Anisakis simplex (Herring worm), this protein is Serine protease inhibitor 2.